We begin with the raw amino-acid sequence, 514 residues long: MYSYEDRLRAVRLYLKLGRRMSATLRQLGYPTKNSLKAWLAEFERNQDLRRGYQRIKRQYTDEQKQRAVDHYIEQGYCLSHTIRSLGYPSREALRAWIRDLRPEFARTVVGSSAPTVARSRLEKQQAVIALNLRVGSAKDVADTVGVSRPTLYNWQHRLLGKVPLKPMTKKKGDTSLEQRHEALLRELAELESQNQRLRMENAILEKASELIKKDMGINPLELTSREKTKVVDALRVTFPLANLLCGLKLARSTYFYQRLRQTRPDKYTQVREVIRTIFEDNYRCYGYRRIDSALRLGGMRVSEKVVRRLMAQERLVVRTPRRRRFSAYAGDPTPAVPNLLNRDFHASAPNTKWLTDLTEIHIPAGKVYVSPIVDCFDGLVVAWNIGTSPDANLVNTMLDHAVRTLRPGEHPVIHSDRGSHYRWPAWIRRTENAQLTRSMSKKGCSPDNAACEGFFGRLKTELIYPRNWQHVTLKDLMTRIDAYIHWYNERRIKVSLGGRSPIEYRHAVGLMSV.

Positions 172–216 form a coiled coil; it reads KGDTSLEQRHEALLRELAELESQNQRLRMENAILEKASELIKKDM. The Integrase catalytic domain occupies 346–510; it reads HASAPNTKWL…SPIEYRHAVG (165 aa). Mg(2+) is bound by residues Asp357 and Asp417.

This sequence belongs to the transposase 8 family.

Functionally, probably involved in the transposition of insertion sequence IS1353. The sequence is that of Probable transposase for insertion sequence element IS1353 from Shigella flexneri.